We begin with the raw amino-acid sequence, 409 residues long: Ligand-gated cation channel ZACN (409 aa).

The signal sequence occupies residues 1 to 18 (MAPRLLLLLLAFLRLGTT). The Extracellular segment spans residues 19–233 (GPLVQGRGFR…LRLQNTALKA (215 aa)). N-linked (GlcNAc...) asparagine glycosylation is found at N55 and N99. A disulfide bridge links C157 with C171. The helical transmembrane segment at 234 to 254 (IIALLVPGEALLLADMCGGLL) threads the bilayer. Residues 255-265 (PLRATERIAYK) are Cytoplasmic-facing. A helical transmembrane segment spans residues 266–286 (VTLLLGYLVFHSSLVQALPSS). At 287-296 (SSCNPLLIYY) the chain is on the extracellular side. A helical transmembrane segment spans residues 297–317 (FTVLLLLLFISTMETVLLAAL). Over 318 to 365 (QARGHLSARSSPIPTPRGEQQDHGDLGPHPEEAPGVKESRSWAEAADH) the chain is Cytoplasmic. A disordered region spans residues 325 to 354 (ARSSPIPTPRGEQQDHGDLGPHPEEAPGVK). The span at 336–354 (EQQDHGDLGPHPEEAPGVK) shows a compositional bias: basic and acidic residues. Residues 366 to 386 (IFFLVYVVGVVCSQFFFIGFW) traverse the membrane as a helical segment. At 387 to 409 (MWATCKSDPAPGEAIPHGGQPRL) the chain is on the extracellular side.

It belongs to the ligand-gated ion channel (TC 1.A.9) family. Glycosylated.

The protein resides in the cell membrane. The catalysed reaction is Na(+)(in) = Na(+)(out). It carries out the reaction K(+)(in) = K(+)(out). In terms of biological role, ligand-gated cation channel that allows the movement of sodium and potassium monoatomic cations across cell membranes when activated by zinc (Zn2+), copper (Cu2+), and changes in pH. Could also transport cesium. This Canis lupus familiaris (Dog) protein is Ligand-gated cation channel ZACN.